Consider the following 220-residue polypeptide: Deoxyribose-phosphate aldolase (220 aa).

Aspartate 89 serves as the catalytic Proton donor/acceptor. Lysine 151 serves as the catalytic Schiff-base intermediate with acetaldehyde. Catalysis depends on lysine 180, which acts as the Proton donor/acceptor.

Belongs to the DeoC/FbaB aldolase family. DeoC type 1 subfamily.

The protein localises to the cytoplasm. The catalysed reaction is 2-deoxy-D-ribose 5-phosphate = D-glyceraldehyde 3-phosphate + acetaldehyde. It participates in carbohydrate degradation; 2-deoxy-D-ribose 1-phosphate degradation; D-glyceraldehyde 3-phosphate and acetaldehyde from 2-deoxy-alpha-D-ribose 1-phosphate: step 2/2. Functionally, catalyzes a reversible aldol reaction between acetaldehyde and D-glyceraldehyde 3-phosphate to generate 2-deoxy-D-ribose 5-phosphate. The protein is Deoxyribose-phosphate aldolase of Bdellovibrio bacteriovorus (strain ATCC 15356 / DSM 50701 / NCIMB 9529 / HD100).